Here is a 287-residue protein sequence, read N- to C-terminus: Formamidopyrimidine-DNA glycosylase (287 aa).

The active-site Schiff-base intermediate with DNA is the P2. Catalysis depends on E3, which acts as the Proton donor. K58 (proton donor; for beta-elimination activity) is an active-site residue. Residues H104, R123, and R166 each coordinate DNA. Residues 251–287 (RVYDREGEPCPTPACKGVIAREVQAGRSTFFCPVCQV) form an FPG-type zinc finger. R277 serves as the catalytic Proton donor; for delta-elimination activity.

The protein belongs to the FPG family. In terms of assembly, monomer. The cofactor is Zn(2+).

The catalysed reaction is Hydrolysis of DNA containing ring-opened 7-methylguanine residues, releasing 2,6-diamino-4-hydroxy-5-(N-methyl)formamidopyrimidine.. It catalyses the reaction 2'-deoxyribonucleotide-(2'-deoxyribose 5'-phosphate)-2'-deoxyribonucleotide-DNA = a 3'-end 2'-deoxyribonucleotide-(2,3-dehydro-2,3-deoxyribose 5'-phosphate)-DNA + a 5'-end 5'-phospho-2'-deoxyribonucleoside-DNA + H(+). Its function is as follows. Involved in base excision repair of DNA damaged by oxidation or by mutagenic agents. Acts as a DNA glycosylase that recognizes and removes damaged bases. Has a preference for oxidized purines, such as 7,8-dihydro-8-oxoguanine (8-oxoG). Has AP (apurinic/apyrimidinic) lyase activity and introduces nicks in the DNA strand. Cleaves the DNA backbone by beta-delta elimination to generate a single-strand break at the site of the removed base with both 3'- and 5'-phosphates. The protein is Formamidopyrimidine-DNA glycosylase of Caulobacter vibrioides (strain ATCC 19089 / CIP 103742 / CB 15) (Caulobacter crescentus).